The chain runs to 669 residues: Methionine--tRNA ligase (669 aa).

Positions 15 to 25 (PYANGPAHIGH) match the 'HIGH' region motif. Zn(2+) contacts are provided by cysteine 146, cysteine 149, cysteine 158, and cysteine 162. Residues 328–332 (KFSKS) carry the 'KMSKS' region motif. Lysine 331 contacts ATP. The 100-residue stretch at 570-669 (QFKALDLRVG…KEVPAGCGIR (100 aa)) folds into the tRNA-binding domain.

This sequence belongs to the class-I aminoacyl-tRNA synthetase family. MetG type 1 subfamily. As to quaternary structure, homodimer. Requires Zn(2+) as cofactor.

The protein resides in the cytoplasm. The enzyme catalyses tRNA(Met) + L-methionine + ATP = L-methionyl-tRNA(Met) + AMP + diphosphate. In terms of biological role, is required not only for elongation of protein synthesis but also for the initiation of all mRNA translation through initiator tRNA(fMet) aminoacylation. The protein is Methionine--tRNA ligase of Methanothrix thermoacetophila (strain DSM 6194 / JCM 14653 / NBRC 101360 / PT) (Methanosaeta thermophila).